The sequence spans 149 residues: SsrA-binding protein (149 aa).

The protein belongs to the SmpB family.

It is found in the cytoplasm. Functionally, required for rescue of stalled ribosomes mediated by trans-translation. Binds to transfer-messenger RNA (tmRNA), required for stable association of tmRNA with ribosomes. tmRNA and SmpB together mimic tRNA shape, replacing the anticodon stem-loop with SmpB. tmRNA is encoded by the ssrA gene; the 2 termini fold to resemble tRNA(Ala) and it encodes a 'tag peptide', a short internal open reading frame. During trans-translation Ala-aminoacylated tmRNA acts like a tRNA, entering the A-site of stalled ribosomes, displacing the stalled mRNA. The ribosome then switches to translate the ORF on the tmRNA; the nascent peptide is terminated with the 'tag peptide' encoded by the tmRNA and targeted for degradation. The ribosome is freed to recommence translation, which seems to be the essential function of trans-translation. This Anaplasma phagocytophilum (strain HZ) protein is SsrA-binding protein.